Here is a 387-residue protein sequence, read N- to C-terminus: Protein BTN1 (387 aa).

The signal sequence occupies residues 1–31 (MELDRDKKTFAYFWLFGLINNILYVVILSAA). 10 helical membrane passes run 43–63 (IVLL…PFFV), 72–92 (IPIL…RSLW), 93–113 (LCLP…ITFL), 129–149 (SGTG…TTVF), 151–171 (LNIQ…LLYY), 225–245 (TVYL…LFPI), 257–276 (YVTY…TWGH), 278–298 (LPVK…LITL), 308–328 (SISW…SSYV), and 347–367 (LGSV…LGII).

It belongs to the battenin family.

The protein localises to the vacuole membrane. In terms of biological role, involved in vacuolar transport and vacuole pH homeostasis. Also required for cytokinesis. The sequence is that of Protein BTN1 (BTN1) from Kluyveromyces lactis (strain ATCC 8585 / CBS 2359 / DSM 70799 / NBRC 1267 / NRRL Y-1140 / WM37) (Yeast).